Reading from the N-terminus, the 707-residue chain is Protein MICRORCHIDIA 7 (707 aa).

2 stretches are compositionally biased toward basic and acidic residues: residues 1 to 11 (MDNSIHVKREI) and 575 to 587 (DNRD…DREG). Disordered stretches follow at residues 1–22 (MDNS…AGFP) and 568–619 (EKSA…SGKD). Residues 590-613 (SIKTPTPASDKFYSSSYPNHNGDN) are compositionally biased toward polar residues. Residues 620–701 (GARLQEELRR…NKIKKMEGSK (82 aa)) are a coiled coil. A Nuclear localization signal motif is present at residues 633 to 640 (RRKALEVE).

The protein belongs to the MORC ATPase protein family. In terms of assembly, homodimer and heterodimer. Component of an RNA-directed DNA methylation (RdDM) complex. Forms homomeric complexes. The cofactor is Mg(2+). Mn(2+) is required as a cofactor.

It is found in the nucleus. In terms of biological role, exhibits ATPase activity. Binds DNA/RNA in a non-specific manner and exhibits endonuclease activity. Probably involved in DNA repair. Involved in RNA-directed DNA methylation (RdDM) as a component of the RdDM machinery and required for gene silencing. May also be involved in the regulation of chromatin architecture to maintain gene silencing. Together with MORC4, acts to suppress a wide set of non-methylated protein-coding genes, especially involved in pathogen response. Positive regulators of defense against the oomycete Hyaloperonospora arabidopsidis (Hpa). The sequence is that of Protein MICRORCHIDIA 7 from Arabidopsis thaliana (Mouse-ear cress).